The sequence spans 54 residues: AEDRSSLSGVSDAEAKEFHALFVSSFTAFIVIAVLAHVLAWAWRPWIPGPKGWA.

Residues 1-20 lie on the Cytoplasmic side of the membrane; that stretch reads AEDRSSLSGVSDAEAKEFHA. 2 residues coordinate a bacteriochlorophyll: His-19 and His-37. Residues 21-43 form a helical membrane-spanning segment; sequence LFVSSFTAFIVIAVLAHVLAWAW. Topologically, residues 44-54 are periplasmic; that stretch reads RPWIPGPKGWA.

Belongs to the antenna complex beta subunit family. As to quaternary structure, the core complex is formed by different alpha and beta chains, binding bacteriochlorophyll molecules, and arranged most probably in tetrameric structures disposed around the reaction center. The non-pigmented gamma chains may constitute additional components.

It localises to the cell inner membrane. Functionally, antenna complexes are light-harvesting systems, which transfer the excitation energy to the reaction centers. This Rhodoblastus acidophilus (Rhodopseudomonas acidophila) protein is Light-harvesting protein B-880 beta chain.